Reading from the N-terminus, the 100-residue chain is Small ribosomal subunit protein uS14c (100 aa).

Belongs to the universal ribosomal protein uS14 family. As to quaternary structure, part of the 30S ribosomal subunit.

It is found in the plastid. Its subcellular location is the chloroplast. In terms of biological role, binds 16S rRNA, required for the assembly of 30S particles. The polypeptide is Small ribosomal subunit protein uS14c (Phalaenopsis aphrodite subsp. formosana (Moth orchid)).